Consider the following 569-residue polypeptide: Proline--tRNA ligase (569 aa).

This sequence belongs to the class-II aminoacyl-tRNA synthetase family. ProS type 1 subfamily. As to quaternary structure, homodimer.

Its subcellular location is the cytoplasm. It carries out the reaction tRNA(Pro) + L-proline + ATP = L-prolyl-tRNA(Pro) + AMP + diphosphate. Catalyzes the attachment of proline to tRNA(Pro) in a two-step reaction: proline is first activated by ATP to form Pro-AMP and then transferred to the acceptor end of tRNA(Pro). As ProRS can inadvertently accommodate and process non-cognate amino acids such as alanine and cysteine, to avoid such errors it has two additional distinct editing activities against alanine. One activity is designated as 'pretransfer' editing and involves the tRNA(Pro)-independent hydrolysis of activated Ala-AMP. The other activity is designated 'posttransfer' editing and involves deacylation of mischarged Ala-tRNA(Pro). The misacylated Cys-tRNA(Pro) is not edited by ProRS. The chain is Proline--tRNA ligase from Latilactobacillus sakei subsp. sakei (strain 23K) (Lactobacillus sakei subsp. sakei).